The primary structure comprises 187 residues: MTHILFAVLVLALLALAFGIILGFAAVKFYVEADPIVDQLDALLPQTQCGQCGYPGCKPYAEALANGDQINKCVPGGDATMRKIADLMGVDPQPLGSAEAAIPVKKVAFIHEDQCIGCTKCIQACPVDAIVGATKAMHTVITDECTGCDLCVDPCPTDCIEMIPVPTTVDNWKWDLASVAIPVKIVE.

Positions 1 to 26 are hydrophobic; the sequence is MTHILFAVLVLALLALAFGIILGFAA. The 4Fe-4S domain maps to 32–90; the sequence is EADPIVDQLDALLPQTQCGQCGYPGCKPYAEALANGDQINKCVPGGDATMRKIADLMGV. [4Fe-4S] cluster contacts are provided by cysteine 49, cysteine 52, cysteine 57, cysteine 73, cysteine 115, cysteine 118, cysteine 121, cysteine 125, cysteine 145, cysteine 148, cysteine 151, and cysteine 155. 4Fe-4S ferredoxin-type domains are found at residues 106–135 and 136–165; these read KVAFIHEDQCIGCTKCIQACPVDAIVGATK and AMHTVITDECTGCDLCVDPCPTDCIEMIPV.

Belongs to the 4Fe4S bacterial-type ferredoxin family. RnfB subfamily. The complex is composed of six subunits: RnfA, RnfB, RnfC, RnfD, RnfE and RnfG. Requires [4Fe-4S] cluster as cofactor.

It localises to the cell inner membrane. In terms of biological role, part of a membrane-bound complex that couples electron transfer with translocation of ions across the membrane. The sequence is that of Ion-translocating oxidoreductase complex subunit B from Aeromonas salmonicida (strain A449).